The chain runs to 101 residues: Large ribosomal subunit protein uL24 (101 aa).

Belongs to the universal ribosomal protein uL24 family. In terms of assembly, part of the 50S ribosomal subunit.

One of two assembly initiator proteins, it binds directly to the 5'-end of the 23S rRNA, where it nucleates assembly of the 50S subunit. Functionally, one of the proteins that surrounds the polypeptide exit tunnel on the outside of the subunit. The sequence is that of Large ribosomal subunit protein uL24 from Streptococcus mutans serotype c (strain ATCC 700610 / UA159).